The chain runs to 178 residues: UPF0098 protein PYRAB11530 (178 aa).

A signal peptide spans 1–22; the sequence is MRYLVPLLVFMVLGMGCLGGGG.

It belongs to the UPF0098 family.

The chain is UPF0098 protein PYRAB11530 from Pyrococcus abyssi (strain GE5 / Orsay).